The following is a 568-amino-acid chain: Urease subunit alpha (568 aa).

The 439-residue stretch at 130–568 folds into the Urease domain; the sequence is GGIDTHIHFI…LPMAQRYFLF (439 aa). Residues H135, H137, and K218 each contribute to the Ni(2+) site. K218 carries the N6-carboxylysine modification. Residue H220 coordinates substrate. The Ni(2+) site is built by H247 and H273. H321 acts as the Proton donor in catalysis. D361 serves as a coordination point for Ni(2+).

The protein belongs to the metallo-dependent hydrolases superfamily. Urease alpha subunit family. Heterotrimer of UreA (gamma), UreB (beta) and UreC (alpha) subunits. Three heterotrimers associate to form the active enzyme. Ni cation is required as a cofactor. In terms of processing, carboxylation allows a single lysine to coordinate two nickel ions.

It localises to the cytoplasm. The enzyme catalyses urea + 2 H2O + H(+) = hydrogencarbonate + 2 NH4(+). It participates in nitrogen metabolism; urea degradation; CO(2) and NH(3) from urea (urease route): step 1/1. This is Urease subunit alpha from Burkholderia pseudomallei (strain 668).